A 600-amino-acid chain; its full sequence is NADH-quinone oxidoreductase subunit C/D (600 aa).

Residues 1 to 190 (MVNNMTDLTA…DPFELTKAKQ (190 aa)) are NADH dehydrogenase I subunit C. Residues 214-600 (DFMFLNLGPN…IDFVMSDVDR (387 aa)) form an NADH dehydrogenase I subunit D region.

The protein in the N-terminal section; belongs to the complex I 30 kDa subunit family. In the C-terminal section; belongs to the complex I 49 kDa subunit family. In terms of assembly, NDH-1 is composed of 13 different subunits. Subunits NuoB, CD, E, F, and G constitute the peripheral sector of the complex.

It localises to the cell inner membrane. It carries out the reaction a quinone + NADH + 5 H(+)(in) = a quinol + NAD(+) + 4 H(+)(out). In terms of biological role, NDH-1 shuttles electrons from NADH, via FMN and iron-sulfur (Fe-S) centers, to quinones in the respiratory chain. The immediate electron acceptor for the enzyme in this species is believed to be ubiquinone. Couples the redox reaction to proton translocation (for every two electrons transferred, four hydrogen ions are translocated across the cytoplasmic membrane), and thus conserves the redox energy in a proton gradient. This Citrobacter koseri (strain ATCC BAA-895 / CDC 4225-83 / SGSC4696) protein is NADH-quinone oxidoreductase subunit C/D.